The chain runs to 95 residues: Gas vesicle protein S (95 aa).

It belongs to the gas vesicle GvpA family.

Its subcellular location is the gas vesicle. Its function is as follows. Probably a minor component of the gas vesicle. It is not clear what function gas vesicles perform in soil bacteria. In terms of biological role, when a minimal gvp locus (gvpA2-gvpR-gvpN-gvpF-gvpG-gvpL-gvpS-gvpK-gvpJ-gvpT-gvpU, called pNL29) is expressed in E.coli gas vesicles are made. The protein is Gas vesicle protein S of Priestia megaterium (Bacillus megaterium).